The following is an 857-amino-acid chain: Putative serine/threonine-protein kinase receptor (857 aa).

An N-terminal signal peptide occupies residues 1–32; that stretch reads MKGARNIYHHSYMSFLLVFVVMILIHPALSIY. Residues 33 to 446 are Extracellular-facing; it reads INTLSSTESL…IAKKRNASGK (414 aa). Residues 35-155 form the Bulb-type lectin domain; the sequence is TLSSTESLTI…SNNDASEYLW (121 aa). Asparagine 47, asparagine 120, asparagine 196, asparagine 260, asparagine 389, and asparagine 442 each carry an N-linked (GlcNAc...) asparagine glycan. A PAN domain is found at 350–433; that stretch reads CSGDGFTRMK…DGQDLYVRLA (84 aa). Cystine bridges form between cysteine 380–cysteine 405 and cysteine 388–cysteine 390. The helical transmembrane segment at 447–466 threads the bilayer; it reads IISLTVGVSVLLLLIMFCLW. The Cytoplasmic segment spans residues 467 to 857; sequence KRKQKRAKAS…QYTCSVIDAR (391 aa). In terms of domain architecture, Protein kinase spans 528 to 779; the sequence is FSSCNKLGQG…PSIFQPQEVL (252 aa). ATP contacts are provided by residues 534–542 and lysine 556; that span reads LGQGGFGIV. Aspartate 653 acts as the Proton acceptor in catalysis.

The protein belongs to the protein kinase superfamily. Ser/Thr protein kinase family. Predominantly in the pistil and anther.

The protein resides in the membrane. The catalysed reaction is L-seryl-[protein] + ATP = O-phospho-L-seryl-[protein] + ADP + H(+). The enzyme catalyses L-threonyl-[protein] + ATP = O-phospho-L-threonyl-[protein] + ADP + H(+). Functionally, involved in sporophytic self-incompatibility system (the inability of flowering plants to achieve self-fertilization), probably acting in combination with S-locus-specific glycoproteins. Interaction with a ligand in the extracellular domain triggers the protein kinase activity of the cytoplasmic domain. The polypeptide is Putative serine/threonine-protein kinase receptor (SRK6) (Brassica oleracea var. viridis (Flowering kale)).